A 120-amino-acid chain; its full sequence is Putative pterin-4-alpha-carbinolamine dehydratase (120 aa).

It belongs to the pterin-4-alpha-carbinolamine dehydratase family.

It carries out the reaction (4aS,6R)-4a-hydroxy-L-erythro-5,6,7,8-tetrahydrobiopterin = (6R)-L-erythro-6,7-dihydrobiopterin + H2O. In Bdellovibrio bacteriovorus (strain ATCC 15356 / DSM 50701 / NCIMB 9529 / HD100), this protein is Putative pterin-4-alpha-carbinolamine dehydratase.